Here is a 330-residue protein sequence, read N- to C-terminus: Protein FAM170A (330 aa).

Disordered stretches follow at residues 1-54 (MKRR…VTST), 76-104 (HRDSPQPQSPLAQVQERGETPPRSQHVSL), and 169-218 (VGTP…AKTP). A compositionally biased stretch (polar residues) spans 174-185 (SDVSTRNLLSDS). The segment covering 189–200 (GEEKEHEERTES) has biased composition (basic and acidic residues). Thr217 carries the post-translational modification Phosphothreonine. The C2H2-type; degenerate zinc-finger motif lies at 228-252 (FRCMACCRVFTTMEALQEHVQFGIR). A disordered region spans residues 270–330 (NMESESTQDE…VFHSPKDRNS (61 aa)). Over residues 275–293 (STQDEQEEENGNEKEEEEK) the composition is skewed to acidic residues. Phosphoserine is present on Ser315.

The protein belongs to the FAM170 family. As to expression, expressed strongly in testis and brain and weakly in prostate, spleen, pancreas and uterus.

It localises to the nucleus. In terms of biological role, acts as a nuclear transcription factor that positively regulates the expression of heat shock genes. Binds to heat shock promoter elements (HSE). This chain is Protein FAM170A (FAM170A), found in Homo sapiens (Human).